Here is a 282-residue protein sequence, read N- to C-terminus: Probable transcription factor At1g66420 (282 aa).

The segment at 33-73 is disordered; sequence SKKNEEFCGGSGKVQPSEMKRRSEGTSTDMTSKRAKKVSAE.

The protein belongs to the GeBP family.

The polypeptide is Probable transcription factor At1g66420 (Arabidopsis thaliana (Mouse-ear cress)).